The sequence spans 225 residues: Putative 5'-nucleotidase alr3139 (225 aa).

A divalent metal cation contacts are provided by D8, D9, S37, and N88.

The protein belongs to the SurE nucleotidase family. Requires a divalent metal cation as cofactor.

The protein localises to the cytoplasm. The enzyme catalyses a ribonucleoside 5'-phosphate + H2O = a ribonucleoside + phosphate. Nucleotidase that shows phosphatase activity on nucleoside 5'-monophosphates. The protein is Putative 5'-nucleotidase alr3139 of Synechocystis sp. (strain ATCC 27184 / PCC 6803 / Kazusa).